A 1383-amino-acid chain; its full sequence is Putative autophagy-related protein 11 (1383 aa).

Coiled-coil stretches lie at residues 16–49 (DKNNDILISKQKIEDLKKSIENLLNDKNAHYELN) and 117–324 (NLFL…QNKE). 2 stretches are compositionally biased toward basic and acidic residues: residues 1151–1224 (EEEK…EDRK) and 1233–1249 (HSSDKEEKYNKKEKTKE). A disordered region spans residues 1151–1249 (EEEKKKNEEE…KYNKKEKTKE (99 aa)).

Belongs to the ATG11 family.

Its function is as follows. Involved in cytoplasm to vacuole transport (Cvt), pexophagy, mitophagy and nucleophagy. Works as scaffold proteins that recruit ATG proteins to the pre-autophagosome (PAS), the site of vesicle/autophagosome formation. The polypeptide is Putative autophagy-related protein 11 (Plasmodium falciparum (isolate 3D7)).